Reading from the N-terminus, the 113-residue chain is Iron-sulfur cluster insertion protein ErpA (113 aa).

Iron-sulfur cluster-binding residues include C41, C105, and C107.

It belongs to the HesB/IscA family. In terms of assembly, homodimer. Requires iron-sulfur cluster as cofactor.

In terms of biological role, required for insertion of 4Fe-4S clusters for at least IspG. This Histophilus somni (strain 129Pt) (Haemophilus somnus) protein is Iron-sulfur cluster insertion protein ErpA.